The following is a 211-amino-acid chain: Small ribosomal subunit protein eS1 (211 aa).

This sequence belongs to the eukaryotic ribosomal protein eS1 family.

The sequence is that of Small ribosomal subunit protein eS1 from Methanothrix thermoacetophila (strain DSM 6194 / JCM 14653 / NBRC 101360 / PT) (Methanosaeta thermophila).